Here is a 109-residue protein sequence, read N- to C-terminus: Large ribosomal subunit protein uL22 (109 aa).

Belongs to the universal ribosomal protein uL22 family. Part of the 50S ribosomal subunit.

Functionally, this protein binds specifically to 23S rRNA; its binding is stimulated by other ribosomal proteins, e.g. L4, L17, and L20. It is important during the early stages of 50S assembly. It makes multiple contacts with different domains of the 23S rRNA in the assembled 50S subunit and ribosome. The globular domain of the protein is located near the polypeptide exit tunnel on the outside of the subunit, while an extended beta-hairpin is found that lines the wall of the exit tunnel in the center of the 70S ribosome. This is Large ribosomal subunit protein uL22 from Blochmanniella pennsylvanica (strain BPEN).